A 223-amino-acid polypeptide reads, in one-letter code: SCMKAAPMKEISIRGQGSLAYPGLQTQGNLDTLSGPNDATRGLTSLADTFEHVIEELLDEQQVIQPSKENKDADLYSSRVMLSSQVPLEPPLLFLLEEYKNYLDAANMSMRVRRHSDPARRGELSVCDSTSEWVTAAEKKTAVDMSGATVTVLEKVPVPKGQLKQYFYETKCSTKGYAKEGCRGIDKRYWNSQCRTTQSYVRALTMDNKKRVGWRFIRIDTSC.

Residues 1–5 (SCMKA) form the signal peptide. Residues 6 to 114 (APMKEISIRG…AANMSMRVRR (109 aa)) constitute a propeptide that is removed on maturation. A glycan (N-linked (GlcNAc...) asparagine) is linked at asparagine 107. Disulfide bonds link cysteine 127/cysteine 194 and cysteine 172/cysteine 223.

This sequence belongs to the NGF-beta family.

The protein localises to the secreted. Promotes the survival of neuronal populations that are all located either in the central nervous system or directly connected to it. The chain is Neurotrophic factor BDNF precursor form (BDNF) from Acrochordus javanicus (Javan wart snake).